We begin with the raw amino-acid sequence, 561 residues long: Urocanate hydratase (561 aa).

Residues 52 to 53 (GG), glutamine 130, 176 to 178 (GMG), glutamate 196, arginine 201, 242 to 243 (NA), 267 to 271 (QTSAH), 277 to 278 (YL), and tyrosine 326 each bind NAD(+). Cysteine 414 is a catalytic residue. Glycine 496 is an NAD(+) binding site.

The protein belongs to the urocanase family. It depends on NAD(+) as a cofactor.

It localises to the cytoplasm. The enzyme catalyses 4-imidazolone-5-propanoate = trans-urocanate + H2O. Its pathway is amino-acid degradation; L-histidine degradation into L-glutamate; N-formimidoyl-L-glutamate from L-histidine: step 2/3. In terms of biological role, catalyzes the conversion of urocanate to 4-imidazolone-5-propionate. This chain is Urocanate hydratase, found in Rhizobium rhizogenes (strain K84 / ATCC BAA-868) (Agrobacterium radiobacter).